The primary structure comprises 164 residues: Glutaredoxin-2, mitochondrial (164 aa).

The transit peptide at 1 to 19 (MIWRRAALAGTRLVWSRSG) directs the protein to the mitochondrion. Ser20 is modified (phosphoserine). The Glutaredoxin domain maps to 57 to 157 (VNQIQETISD…PLVHQCYLKK (101 aa)). Cys68 serves as a coordination point for [2Fe-2S] cluster. Lys74 is a binding site for glutathione. An S-glutathionyl cysteine; alternate modification is found at Cys77. Cys77 and Cys80 are disulfide-bonded. Residues Gln109 and Val121 each contribute to the glutathione site. Cys153 lines the [2Fe-2S] cluster pocket.

Belongs to the glutaredoxin family. In terms of assembly, monomer; active form. Homodimer; inactive form. The homodimer is probably linked by 1 2Fe-2S cluster. Widely expressed. Expressed in brain, heart, skeletal muscle, colon, thymus, spleen, kidney, liver, small intestine, placenta and lung. Not expressed in peripheral blood leukocytes.

The protein localises to the mitochondrion. It is found in the nucleus. The 2Fe-2S present in the homodimer leads to inactivation of the enzyme. The 2Fe-2S may serve as a redox sensor: the presence of one-electron oxidants or reductants leading to the loss of the 2Fe-2S cluster, subsequent monomerization and activation of the enzyme. Unlike other glutaredoxins, it is not inhibited by oxidation of structural Cys residues. Glutathione-dependent oxidoreductase that facilitates the maintenance of mitochondrial redox homeostasis upon induction of apoptosis by oxidative stress. Involved in response to hydrogen peroxide and regulation of apoptosis caused by oxidative stress. Acts as a very efficient catalyst of monothiol reactions because of its high affinity for protein glutathione-mixed disulfides. Can receive electrons not only from glutathione (GSH), but also from thioredoxin reductase supporting both monothiol and dithiol reactions. Efficiently catalyzes both glutathionylation and deglutathionylation of mitochondrial complex I, which in turn regulates the superoxide production by the complex. Overexpression decreases the susceptibility to apoptosis and prevents loss of cardiolipin and cytochrome c release. This chain is Glutaredoxin-2, mitochondrial (GLRX2), found in Homo sapiens (Human).